The sequence spans 222 residues: Uridine kinase (222 aa).

Residue 13 to 20 (GGSGAGKT) coordinates ATP.

This sequence belongs to the uridine kinase family.

It is found in the cytoplasm. It catalyses the reaction uridine + ATP = UMP + ADP + H(+). The enzyme catalyses cytidine + ATP = CMP + ADP + H(+). Its pathway is pyrimidine metabolism; CTP biosynthesis via salvage pathway; CTP from cytidine: step 1/3. It functions in the pathway pyrimidine metabolism; UMP biosynthesis via salvage pathway; UMP from uridine: step 1/1. The protein is Uridine kinase of Chlamydia pneumoniae (Chlamydophila pneumoniae).